A 468-amino-acid chain; its full sequence is Mitochondrial distribution and morphology protein 10 (468 aa).

The protein belongs to the MDM10 family. Component of the ER-mitochondria encounter structure (ERMES) or MDM complex, composed of MMM1, MDM10, MDM12 and MDM34. Associates with the mitochondrial outer membrane sorting assembly machinery SAM(core) complex.

The protein localises to the mitochondrion outer membrane. Component of the ERMES/MDM complex, which serves as a molecular tether to connect the endoplasmic reticulum and mitochondria. Components of this complex are involved in the control of mitochondrial shape and protein biogenesis and may function in phospholipid exchange. MDM10 is involved in the late assembly steps of the general translocase of the mitochondrial outer membrane (TOM complex). Functions in the TOM40-specific route of the assembly of outer membrane beta-barrel proteins, including the association of TOM40 with the receptor TOM22 and small TOM proteins. Can associate with the SAM(core) complex as well as the MDM12-MMM1 complex, both involved in late steps of the major beta-barrel assembly pathway, that is responsible for biogenesis of all outer membrane beta-barrel proteins. May act as a switch that shuttles between both complexes and channels precursor proteins into the TOM40-specific pathway. Plays a role in mitochondrial morphology and in the inheritance of mitochondria. The sequence is that of Mitochondrial distribution and morphology protein 10 from Blastomyces gilchristii (strain SLH14081) (Blastomyces dermatitidis).